A 298-amino-acid polypeptide reads, in one-letter code: Protoheme IX farnesyltransferase (298 aa).

The next 9 helical transmembrane spans lie at 26-46 (VVSL…PGAV), 52-72 (LLGT…NCLV), 93-113 (VSVP…LFIL), 120-140 (LTMW…TVIL), 148-168 (IVIG…AITG), 174-194 (ALLL…ALAL), 219-239 (LHVL…YLTQ), 241-261 (SGLI…YYAI), and 278-298 (YSII…YFYF).

This sequence belongs to the UbiA prenyltransferase family. Protoheme IX farnesyltransferase subfamily.

The protein localises to the cell inner membrane. The enzyme catalyses heme b + (2E,6E)-farnesyl diphosphate + H2O = Fe(II)-heme o + diphosphate. The protein operates within porphyrin-containing compound metabolism; heme O biosynthesis; heme O from protoheme: step 1/1. Its function is as follows. Converts heme B (protoheme IX) to heme O by substitution of the vinyl group on carbon 2 of heme B porphyrin ring with a hydroxyethyl farnesyl side group. In Nitrosomonas eutropha (strain DSM 101675 / C91 / Nm57), this protein is Protoheme IX farnesyltransferase.